The following is a 433-amino-acid chain: Tol-Pal system protein TolB (433 aa).

A signal peptide spans 1 to 21; the sequence is MIKRLRGLLVLLCCVAGMAMA.

Belongs to the TolB family. As to quaternary structure, the Tol-Pal system is composed of five core proteins: the inner membrane proteins TolA, TolQ and TolR, the periplasmic protein TolB and the outer membrane protein Pal. They form a network linking the inner and outer membranes and the peptidoglycan layer.

Its subcellular location is the periplasm. In terms of biological role, part of the Tol-Pal system, which plays a role in outer membrane invagination during cell division and is important for maintaining outer membrane integrity. The protein is Tol-Pal system protein TolB of Pseudomonas entomophila (strain L48).